A 77-amino-acid polypeptide reads, in one-letter code: Apelin (77 aa).

Residues 1 to 22 (MNLRRCVQALLLLWLCLSAVCG) form the signal peptide. The propeptide occupies 23–41 (GPLLQTSDGKEMEEGTIRY). The segment at 43-77 (VQPRGPRSGPGPWQGGRRKFRRQRPRLSHKGPMPF) is disordered. Residues 58-71 (GRRKFRRQRPRLSH) show a composition bias toward basic residues. A Pyrrolidone carboxylic acid modification is found at Q65.

Belongs to the apelin family. In terms of processing, at least 5 active peptides may be produced by proteolytic processing of the peptide precursor.

It is found in the secreted. It localises to the extracellular space. In terms of biological role, peptide hormone that functions as endogenous ligand for the G-protein-coupled apelin receptor (APLNR/APJ), that plays a role in cadiovascular homeostasis. Functions as a balanced agonist activating both G(i) protein pathway and beta-arrestin pathway of APLNR. Downstream G proteins activation, apelin can inhibit cAMP production and activate key intracellular effectors such as ERKs. On the other hand, APLNR activation induces beta-arrestin recruitment to the membrane leading to desensitization and internalization of the receptor. Apelin blunts cardiac hypertrophic induction from APLNR on response to pathological stimuli, but also induces myocardial hypertrophy under normal conditions. Apelin-36 dissociates more hardly than (pyroglu)apelin-13 from APLNR. Involved in the regulation of cardiac precursor cell movements during gastrulation and heart morphogenesis. Has an inhibitory effect on cytokine production in response to T-cell receptor/CD3 cross-linking; the oral intake of apelin in the colostrum and the milk might therefore modulate immune responses in neonates. Plays a role in early coronary blood vessels formation. Mediates myocardial contractility in an ERK1/2-dependent manner. May also have a role in the central control of body fluid homeostasis by influencing vasopressin release and drinking behavior. The polypeptide is Apelin (APLN) (Bos taurus (Bovine)).